We begin with the raw amino-acid sequence, 29 residues long: Cytochrome b6-f complex subunit 8 (29 aa).

A helical membrane pass occupies residues 3-23; that stretch reads ILSISWAFLMVVFTFSLSLVV.

The protein belongs to the PetN family. As to quaternary structure, the 4 large subunits of the cytochrome b6-f complex are cytochrome b6, subunit IV (17 kDa polypeptide, PetD), cytochrome f and the Rieske protein, while the 4 small subunits are PetG, PetL, PetM and PetN. The complex functions as a dimer.

It localises to the plastid. It is found in the chloroplast thylakoid membrane. Component of the cytochrome b6-f complex, which mediates electron transfer between photosystem II (PSII) and photosystem I (PSI), cyclic electron flow around PSI, and state transitions. The protein is Cytochrome b6-f complex subunit 8 of Chara vulgaris (Common stonewort).